A 270-amino-acid polypeptide reads, in one-letter code: Putative pyruvate, phosphate dikinase regulatory protein (270 aa).

Residue 151–158 (GVSRTSKT) participates in ADP binding.

This sequence belongs to the pyruvate, phosphate/water dikinase regulatory protein family. PDRP subfamily.

The catalysed reaction is N(tele)-phospho-L-histidyl/L-threonyl-[pyruvate, phosphate dikinase] + ADP = N(tele)-phospho-L-histidyl/O-phospho-L-threonyl-[pyruvate, phosphate dikinase] + AMP + H(+). It catalyses the reaction N(tele)-phospho-L-histidyl/O-phospho-L-threonyl-[pyruvate, phosphate dikinase] + phosphate + H(+) = N(tele)-phospho-L-histidyl/L-threonyl-[pyruvate, phosphate dikinase] + diphosphate. In terms of biological role, bifunctional serine/threonine kinase and phosphorylase involved in the regulation of the pyruvate, phosphate dikinase (PPDK) by catalyzing its phosphorylation/dephosphorylation. This Bacillus subtilis (strain 168) protein is Putative pyruvate, phosphate dikinase regulatory protein (yqfL).